Reading from the N-terminus, the 405-residue chain is MRRCRACGSPRLLYHSELYDLSIAHIDCDAFYASVEKRDNPELADKPVIVGGGKRGVVSTACYIARIHGVRSAMPMFKALEACPDAVVIKPDMEKYSRVGREIRTMMQELTPLVQPLSIDEAFLDLSGTEKLHHDPPARVLAKFTGRVEKEVGVSVSAGLSYCKFLAKVASDLQKPRGFSVVGEAEALSFLAARPVTTIWGVGKAFAATLEADGIRMIAQLQEMEESELMRRYGVMGQRLFRLARGIDERHVHNNDPVKSVSSETTFFHDISRHEDLVPILRSLSEKVAWRLKKSGIAGQTVVLKMKTADFKSRTRNRRLDDPTQLADRIFRTGLALLEKETDGTKFRLIGIGVSDLRDAGLADPPDLVDRQATRRAAAEAAMDKLRDKFGKGSVETGYTFRTRK.

The region spanning 23–203 (IAHIDCDAFY…RPVTTIWGVG (181 aa)) is the UmuC domain. Aspartate 27 and aspartate 120 together coordinate Mg(2+). Glutamate 121 is an active-site residue.

The protein belongs to the DNA polymerase type-Y family. In terms of assembly, monomer. Requires Mg(2+) as cofactor.

Its subcellular location is the cytoplasm. The enzyme catalyses DNA(n) + a 2'-deoxyribonucleoside 5'-triphosphate = DNA(n+1) + diphosphate. Its function is as follows. Poorly processive, error-prone DNA polymerase involved in untargeted mutagenesis. Copies undamaged DNA at stalled replication forks, which arise in vivo from mismatched or misaligned primer ends. These misaligned primers can be extended by PolIV. Exhibits no 3'-5' exonuclease (proofreading) activity. May be involved in translesional synthesis, in conjunction with the beta clamp from PolIII. The chain is DNA polymerase IV 1 (dinB1) from Agrobacterium fabrum (strain C58 / ATCC 33970) (Agrobacterium tumefaciens (strain C58)).